The primary structure comprises 381 residues: Selenoprotein P (381 aa).

Residues 1 to 19 (MWRSLGLALALCLLPLGGT) form the signal peptide. N46 carries an N-linked (GlcNAc...) asparagine glycan. Residue U59 is a non-standard amino acid, selenocysteine. Residues N83, N119, and N128 are each glycosylated (N-linked (GlcNAc...) asparagine). Residues 202-268 (SPHYHHEHHH…ENRDMPGSED (67 aa)) form a disordered region. Residues 204–217 (HYHHEHHHNHRHQH) show a composition bias toward basic residues. A compositionally biased stretch (polar residues) spans 218 to 229 (LGSSELSENQQP). Over residues 243-255 (LHHHHKHKGQHRQ) the composition is skewed to basic residues. S266 is subject to Phosphoserine. Residues U318 and U330 are each a non-standard amino acid (selenocysteine). An N-linked (GlcNAc...) asparagine glycan is attached at N338. 6 non-standard amino acids (selenocysteine) are found at residues U345, U352, U367, U369, U376, and U378. The interval 352–381 (UQISQQLIPTEASTSURUKNQAKKUEUPSN) is disordered. The segment covering 353–369 (QISQQLIPTEASTSURU) has biased composition (polar residues).

This sequence belongs to the selenoprotein P family. Post-translationally, phosphorylation sites are present in the extracellular medium.

The protein resides in the secreted. Functionally, might be responsible for some of the extracellular antioxidant defense properties of selenium or might be involved in the transport of selenium. May supply selenium to tissues such as brain and testis. This Pongo abelii (Sumatran orangutan) protein is Selenoprotein P.